We begin with the raw amino-acid sequence, 462 residues long: Argininosuccinate lyase (462 aa).

It belongs to the lyase 1 family. Argininosuccinate lyase subfamily.

The protein resides in the cytoplasm. It carries out the reaction 2-(N(omega)-L-arginino)succinate = fumarate + L-arginine. It functions in the pathway amino-acid biosynthesis; L-arginine biosynthesis; L-arginine from L-ornithine and carbamoyl phosphate: step 3/3. This Rippkaea orientalis (strain PCC 8801 / RF-1) (Cyanothece sp. (strain PCC 8801)) protein is Argininosuccinate lyase.